The following is a 342-amino-acid chain: DNA-directed RNA polymerase subunit alpha (342 aa).

The tract at residues 1-239 is alpha N-terminal domain (alpha-NTD); that stretch reads MTTFLAKNWS…DQLQVFINFQ (239 aa). The interval 254–342 is alpha C-terminal domain (alpha-CTD); it reads INPVLLKKVY…SLAKKHEDQY (89 aa).

It belongs to the RNA polymerase alpha chain family. Homodimer. The RNAP catalytic core consists of 2 alpha, 1 beta, 1 beta' and 1 omega subunit. When a sigma factor is associated with the core the holoenzyme is formed, which can initiate transcription.

The catalysed reaction is RNA(n) + a ribonucleoside 5'-triphosphate = RNA(n+1) + diphosphate. Functionally, DNA-dependent RNA polymerase catalyzes the transcription of DNA into RNA using the four ribonucleoside triphosphates as substrates. This chain is DNA-directed RNA polymerase subunit alpha, found in Orientia tsutsugamushi (strain Ikeda) (Rickettsia tsutsugamushi).